A 277-amino-acid polypeptide reads, in one-letter code: Indole-3-glycerol phosphate synthase (277 aa).

It belongs to the TrpC family.

The catalysed reaction is 1-(2-carboxyphenylamino)-1-deoxy-D-ribulose 5-phosphate + H(+) = (1S,2R)-1-C-(indol-3-yl)glycerol 3-phosphate + CO2 + H2O. The protein operates within amino-acid biosynthesis; L-tryptophan biosynthesis; L-tryptophan from chorismate: step 4/5. The protein is Indole-3-glycerol phosphate synthase of Pseudomonas putida (strain W619).